Consider the following 1657-residue polypeptide: A disintegrin and metalloproteinase with thrombospondin motifs 7 (1657 aa).

The N-terminal stretch at 1-20 is a signal peptide; sequence MHRGPSLLLILCALASRVLG. A propeptide spanning residues 21-220 is cleaved from the precursor; it reads PASGLVTEGR…QQQQKRRQQR (200 aa). N-linked (GlcNAc...) asparagine glycosylation is present at Asn-84. The disordered stretch occupies residues 165–221; it reads PGHAQPHVVYKHQGSRKQAQQGDSRPSGTCGMQVPPDLEQQREHWEQQQQKRRQQRS. Over residues 180–191 the composition is skewed to polar residues; sequence RKQAQQGDSRPS. Positions 192–199 match the Cysteine switch motif; that stretch reads GTCGMQVP. Position 194 (Cys-194) interacts with Zn(2+). The Peptidase M12B domain occupies 226–437; that stretch reads KWVETLVVAD…GWGLCLDDRP (212 aa). 11 disulfides stabilise this stretch: Cys-302/Cys-356, Cys-331/Cys-338, Cys-350/Cys-432, Cys-389/Cys-416, Cys-459/Cys-482, Cys-470/Cys-488, Cys-477/Cys-507, Cys-501/Cys-512, Cys-535/Cys-572, Cys-539/Cys-577, and Cys-550/Cys-562. Position 372 (His-372) interacts with Zn(2+). Glu-373 is an active-site residue. The Zn(2+) site is built by His-376 and His-382. In terms of domain architecture, Disintegrin spans 447–522; sequence VLPGVLYDVN…VPEGFQPEAV (76 aa). One can recognise a TSP type-1 1 domain in the interval 523-578; it reads DGGWSGWSAWSDCSRSCGVGVRSSERQCTQPVPKNRGKYCVGERKRSQLCNLPACP. The N-linked (GlcNAc...) asparagine glycan is linked to Asn-622. Residues 683–794 are spacer; the sequence is QTVSRTFKET…PGVHYQYTIQ (112 aa). 3 TSP type-1 domains span residues 804–863, 864–923, and 925–978; these read PEFS…EPCP, PRWW…NRHV, and CPST…QPCQ. 5 disordered regions span residues 1009–1034, 1073–1127, 1140–1237, 1283–1304, and 1317–1384; these read LAPRPSPASSPKPVSISNAIDEEELD, GGWT…GLEQ, EDTP…DVVE, GRDSPLEPGTPTFSSPELSSQH, and TVPT…ARNA. Positions 1211-1224 are enriched in pro residues; it reads PQSPIPTQPSPPSI. Polar residues-rich tracts occupy residues 1293-1304 and 1327-1342; these read PTFSSPELSSQH and PSGQPQTPNLEGTQSP. TSP type-1 domains lie at 1366–1414, 1417–1477, 1479–1522, and 1524–1584; these read QPSL…SGND, CTLA…CQPG, TKPP…PEPG, and CEES…LCSH. In terms of domain architecture, PLAC spans 1587–1627; sequence WPESSRPCATEDCELVEPPRCERDRLSFNFCETLRLLGRCQ.

In terms of assembly, interacts with COMP. Requires Zn(2+) as cofactor. Post-translationally, N-glycosylated. Can be O-fucosylated by POFUT2 on a serine or a threonine residue found within the consensus sequence C1-X(2)-(S/T)-C2-G of the TSP type-1 repeat domains where C1 and C2 are the first and second cysteine residue of the repeat, respectively. Fucosylated repeats can then be further glycosylated by the addition of a beta-1,3-glucose residue by the glucosyltransferase, B3GALTL. Fucosylation mediates the efficient secretion of ADAMTS family members. Can also be C-glycosylated with one or two mannose molecules on tryptophan residues within the consensus sequence W-X-X-W of the TPRs. N- and C-glycosylations can also facilitate secretion. O-glycosylated proteoglycan; contains chondroitin sulfate. In terms of processing, may be cleaved by a furin endopeptidase. The precursor is sequentially processed.

The protein resides in the secreted. The protein localises to the extracellular space. It localises to the extracellular matrix. In terms of biological role, metalloprotease. Was previously shown to degrade COMP. However, a later study found no activity against COMP. The chain is A disintegrin and metalloproteinase with thrombospondin motifs 7 (Adamts7) from Mus musculus (Mouse).